A 752-amino-acid polypeptide reads, in one-letter code: Mitochondrial Rho GTPase 1 (752 aa).

At 1–671 the chain is on the cytoplasmic side; the sequence is MRKDVRIVLA…RNALSYGTNR (671 aa). Residues 2–170 enclose the Miro 1 domain; the sequence is RKDVRIVLAG…FYFAQKAVLY (169 aa). GTP contacts are provided by residues 11–18, 57–61, and 115–118; these read GDPDVGKS, DTSSS, and NKID. EF-hand domains follow at residues 186-221 and 333-368; these read ACVD…CFDT and NGYQ…APDN. Residues D199, D201, D203, E210, D346, D348, D350, and E357 each coordinate Ca(2+). The segment at 426 to 460 is disordered; that stretch reads SSGSASTPAPIPLTPTGPPGSRPSRNRTPCPPSTI. Residues 434–446 are compositionally biased toward pro residues; sequence APIPLTPTGPPGS. The Miro 2 domain maps to 481-651; it reads RSVFLGFVLG…YGLICTIAVD (171 aa). GTP contacts are provided by residues 490 to 497, 526 to 530, and 595 to 598; these read GAAGSGKT, EQAGA, and TKAD. Residues 672-692 traverse the membrane as a helical; Anchor for type IV membrane protein segment; that stretch reads WQFWGYIGLVVIGGGGAVWIC. Over 693–752 the chain is Mitochondrial intermembrane; sequence AKVLKVPIGSTLGFGSSASTTSWWLSGAQARGAGGPNATKVSSWFDWIRWQSSSNVRSEL.

Belongs to the mitochondrial Rho GTPase family.

The protein localises to the mitochondrion outer membrane. Mitochondrial GTPase involved in mitochondrial trafficking. Probably involved in control of anterograde transport of mitochondria and their subcellular distribution. This is Mitochondrial Rho GTPase 1 (GEM1) from Mycosarcoma maydis (Corn smut fungus).